A 371-amino-acid chain; its full sequence is UDP-N-acetylglucosamine--N-acetylmuramyl-(pentapeptide) pyrophosphoryl-undecaprenol N-acetylglucosamine transferase (371 aa).

UDP-N-acetyl-alpha-D-glucosamine contacts are provided by residues 15–17, N126, R172, S199, I256, 275–280, and Q301; these read TGG and ALTVSE.

The protein belongs to the glycosyltransferase 28 family. MurG subfamily.

The protein resides in the cell inner membrane. It catalyses the reaction di-trans,octa-cis-undecaprenyl diphospho-N-acetyl-alpha-D-muramoyl-L-alanyl-D-glutamyl-meso-2,6-diaminopimeloyl-D-alanyl-D-alanine + UDP-N-acetyl-alpha-D-glucosamine = di-trans,octa-cis-undecaprenyl diphospho-[N-acetyl-alpha-D-glucosaminyl-(1-&gt;4)]-N-acetyl-alpha-D-muramoyl-L-alanyl-D-glutamyl-meso-2,6-diaminopimeloyl-D-alanyl-D-alanine + UDP + H(+). The protein operates within cell wall biogenesis; peptidoglycan biosynthesis. Cell wall formation. Catalyzes the transfer of a GlcNAc subunit on undecaprenyl-pyrophosphoryl-MurNAc-pentapeptide (lipid intermediate I) to form undecaprenyl-pyrophosphoryl-MurNAc-(pentapeptide)GlcNAc (lipid intermediate II). This is UDP-N-acetylglucosamine--N-acetylmuramyl-(pentapeptide) pyrophosphoryl-undecaprenol N-acetylglucosamine transferase from Francisella tularensis subsp. holarctica (strain FTNF002-00 / FTA).